The following is a 279-amino-acid chain: Lectin 9 (279 aa).

A signal peptide spans 1 to 23; that stretch reads MALSSALIKIFITFLFLQNHVNS. N-linked (GlcNAc...) asparagine glycosylation is found at asparagine 116, asparagine 139, asparagine 235, and asparagine 272.

This sequence belongs to the leguminous lectin family.

Its function is as follows. May be involved in arbuscular mycorrhizal (AM) symbiosis with AM fungi. The chain is Lectin 9 from Medicago truncatula (Barrel medic).